We begin with the raw amino-acid sequence, 385 residues long: Deoxyguanosinetriphosphate triphosphohydrolase-like protein (385 aa).

Basic and acidic residues predominate over residues 1-14 (MTEGVEGRSQERSD). The tract at residues 1 to 23 (MTEGVEGRSQERSDLAGFAARSA) is disordered. Residues 75–204 (RLTHSLEVAQ…INYADEIAYN (130 aa)) form the HD domain.

It belongs to the dGTPase family. Type 2 subfamily.

This chain is Deoxyguanosinetriphosphate triphosphohydrolase-like protein, found in Geobacter metallireducens (strain ATCC 53774 / DSM 7210 / GS-15).